A 112-amino-acid chain; its full sequence is Nitrogenase-stabilizing/protective protein NifW (112 aa).

Belongs to the NifW family. As to quaternary structure, homotrimer; associates with NifD.

May protect the nitrogenase Fe-Mo protein from oxidative damage. This chain is Nitrogenase-stabilizing/protective protein NifW, found in Rhodopseudomonas palustris (strain BisA53).